The chain runs to 880 residues: Beta-N-acetylglucosaminidase (880 aa).

An N-terminal signal peptide occupies residues 1–27 (MKKRLIAPMLLSAASLAFFAMSGSAQA). SPOR domains lie at 70 to 149 (SGTT…VKAY), 150 to 229 (GAAQ…LKET), and 230 to 311 (VKGQ…YQQV). 2 tandem repeats follow at residues 439-473 (ITTESLLDQTKVNQALTFFKSNHISVASQKTGQTA) and 479-513 (ITTEAIISQEEIDRVLTFFKQNHIAVTTSKTGQTA). One can recognise an SH3b domain in the interval 630-700 (TATSTVTADV…VDPNNFSRDS (71 aa)).

Belongs to the glycosyl hydrolase 73 family. Homodimer.

Its subcellular location is the secreted. It is found in the cell wall. The enzyme catalyses an N(4)-(oligosaccharide-(1-&gt;3)-[oligosaccharide-(1-&gt;6)]-beta-D-Man-(1-&gt;4)-beta-D-GlcNAc-(1-&gt;4)-alpha-D-GlcNAc)-L-asparaginyl-[protein] + H2O = an oligosaccharide-(1-&gt;3)-[oligosaccharide-(1-&gt;6)]-beta-D-Man-(1-&gt;4)-D-GlcNAc + N(4)-(N-acetyl-beta-D-glucosaminyl)-L-asparaginyl-[protein]. Its activity is regulated as follows. Inhibited by diethyl pyrocarbonate, slightly by EDTA. Not inhibited by PMSF, diisopropyl fluorophosphate, 2-mercaptoethanol or N-ethylmaleimide. Its function is as follows. Cell wall hydrolase not involved in cell autolysis, competence, sporulation or germination. It hydrolyzes the beta-1,4 glycan bond between the N-acetylglucosaminyl and the N-acetylmuramoyl residues in the glycan chain. This is Beta-N-acetylglucosaminidase (lytD) from Bacillus subtilis (strain 168).